The primary structure comprises 206 residues: Pro-glucagon (206 aa).

The N-terminal stretch at 1–22 is a signal peptide; sequence MKMKSIYFIAGLLLMIVQGSWQ. Residues 27–57 form a disordered region; sequence DTEEKSRSFKASQSEPLDESRQLNEVKRHSQ. The span at 44 to 54 shows a compositional bias: basic and acidic residues; that stretch reads DESRQLNEVKR. Positions 86 to 109 are excised as a propeptide; it reads NGQQGQEDKENDKFPDQLSSNAIS. At R147 the chain carries Arginine amide. Propeptides lie at residues 151 to 163 and 199 to 206; these read DFPEKALMAEEMG and RDLLGEYQ.

This sequence belongs to the glucagon family. Proglucagon is post-translationally processed in a tissue-specific manner in pancreatic A cells and intestinal L cells. In pancreatic A cells, the major bioactive hormone is glucagon cleaved by PCSK2/PC2. In the intestinal L cells PCSK1/PC1 liberates GLP-1 and GLP-2. GLP-1 is further N-terminally truncated by post-translational processing in the intestinal L cells resulting in GLP-1(7-37) GLP-1-(7-36)amide.

Its subcellular location is the secreted. In terms of biological role, plays a key role in glucose metabolism and homeostasis. Regulates blood glucose by increasing gluconeogenesis and decreasing glycolysis. Functionally, potent stimulator of glucose-dependent insulin release. Plays important roles on gastric motility and the suppression of plasma glucagon levels. May be involved in the suppression of satiety and stimulation of glucose disposal in peripheral tissues, independent of the actions of insulin. Has growth-promoting activities on intestinal epithelium. May also regulate the hypothalamic pituitary axis (HPA) via effects on LH, TSH, CRH, oxytocin, and vasopressin secretion. Increases islet mass through stimulation of islet neogenesis and pancreatic beta cell proliferation. Stimulates intestinal growth and up-regulates villus height in the small intestine, concomitant with increased crypt cell proliferation and decreased enterocyte apoptosis. The gastrointestinal tract, from the stomach to the colon is the principal target for GLP-2 action. Plays a key role in nutrient homeostasis, enhancing nutrient assimilation through enhanced gastrointestinal function, as well as increasing nutrient disposal. Stimulates intestinal glucose transport and decreases mucosal permeability. The polypeptide is Pro-glucagon (GCG) (Gallus gallus (Chicken)).